The sequence spans 499 residues: Cytochrome P450 710A2 (499 aa).

Residues 5–25 (VSIFASLAPYLVSALLLFFLI) form a helical membrane-spanning segment. Residue C439 coordinates heme.

The protein belongs to the cytochrome P450 family. Heme serves as cofactor. In terms of tissue distribution, expressed in the vascular tissues of roots, shoots, stems and leaves. Expressed in root tips, carpes, siliques and seeds.

Its subcellular location is the membrane. The catalysed reaction is 5-dehydroepisterol + NADPH + O2 + H(+) = ergosta-5,7,22,24(28)-tetraen-3beta-ol + NADP(+) + 2 H2O. Its pathway is steroid biosynthesis; sterol biosynthesis. In terms of biological role, required to form the C-22 double bond in the sterol side chain. Possesses in vitro C-22 desaturase activity toward 24-epi-campesterol and beta-sitosterol and produces brassicasterol and stigmasterol, respectively. No activity with campesterol. The chain is Cytochrome P450 710A2 from Arabidopsis thaliana (Mouse-ear cress).